Consider the following 545-residue polypeptide: ATP synthase subunit alpha (545 aa).

ATP is bound at residue 173 to 180 (GDRKTGKT).

Belongs to the ATPase alpha/beta chains family. In terms of assembly, F-type ATPases have 2 components, CF(1) - the catalytic core - and CF(0) - the membrane proton channel. CF(1) has five subunits: alpha(3), beta(3), gamma(1), delta(1), epsilon(1). CF(0) has three main subunits: a(1), b(2) and c(9-12). The alpha and beta chains form an alternating ring which encloses part of the gamma chain. CF(1) is attached to CF(0) by a central stalk formed by the gamma and epsilon chains, while a peripheral stalk is formed by the delta and b chains.

Its subcellular location is the cell membrane. It carries out the reaction ATP + H2O + 4 H(+)(in) = ADP + phosphate + 5 H(+)(out). In terms of biological role, produces ATP from ADP in the presence of a proton gradient across the membrane. The alpha chain is a regulatory subunit. This Renibacterium salmoninarum (strain ATCC 33209 / DSM 20767 / JCM 11484 / NBRC 15589 / NCIMB 2235) protein is ATP synthase subunit alpha.